We begin with the raw amino-acid sequence, 200 residues long: LHFPL tetraspan subfamily member 7 protein (200 aa).

Helical transmembrane passes span 5-27, 68-88, 113-133, and 150-170; these read VWVALGLSLTCTSAFSLISPAWF, VSAVMLLGGWLLLAFNAIFLL, AATAMIVGLLIFPIGLASPFI, and LGWGYMTAILNAVLASLLPII.

Belongs to the TMEM211 family.

Its subcellular location is the membrane. This is LHFPL tetraspan subfamily member 7 protein from Homo sapiens (Human).